The sequence spans 350 residues: Purine-rich element-binding protein gamma (350 aa).

2 disordered regions span residues 1 to 59 and 136 to 172; these read MERA…GTSE and GHRQEHGQSKEQVSRRRQKHSAPSPPVSVGSEEHPHS. A compositionally biased stretch (gly residues) spans 9–27; it reads GGGSGGGRGRGGKNVGGPG. Residues 47 to 59 show a composition bias toward polar residues; the sequence is ASATPNQSGGTSE. Residues 54-296 mediate DNA binding; that stretch reads SGGTSEIQEL…GIFLKVSEVR (243 aa). Positions 137-149 are enriched in basic and acidic residues; the sequence is HRQEHGQSKEQVS. Phosphoserine occurs at positions 163, 166, and 342.

The protein belongs to the PUR DNA-binding protein family. As to expression, isoform 1 is expressed in testis. Isoform 2 is expressed in blastocyst and kidney.

Its subcellular location is the nucleus. This Mus musculus (Mouse) protein is Purine-rich element-binding protein gamma (Purg).